The following is a 328-amino-acid chain: Carbonic anhydrase-related protein 11 (328 aa).

The signal sequence occupies residues 1-23 (MGAAPRLSAPRVLVLWAALGAAA). The Alpha-carbonic anhydrase domain occupies 33–303 (DWWSYKDNLQ…LAHRALRGNR (271 aa)). N-linked (GlcNAc...) asparagine glycosylation occurs at N118. Residues 300 to 328 (RGNRDPRHPERRCRGPNYRLHVDDVPHGL) are disordered. The span at 319–328 (LHVDDVPHGL) shows a compositional bias: basic and acidic residues.

It belongs to the alpha-carbonic anhydrase family.

It localises to the secreted. Functionally, does not have a catalytic activity. In Ovis aries (Sheep), this protein is Carbonic anhydrase-related protein 11 (CA11).